Consider the following 360-residue polypeptide: Methylthioribose-1-phosphate isomerase (360 aa).

The active-site Proton donor is Asp252.

Belongs to the eIF-2B alpha/beta/delta subunits family. MtnA subfamily.

It localises to the cytoplasm. It is found in the nucleus. The catalysed reaction is 5-(methylsulfanyl)-alpha-D-ribose 1-phosphate = 5-(methylsulfanyl)-D-ribulose 1-phosphate. It participates in amino-acid biosynthesis; L-methionine biosynthesis via salvage pathway; L-methionine from S-methyl-5-thio-alpha-D-ribose 1-phosphate: step 1/6. Its function is as follows. Catalyzes the interconversion of methylthioribose-1-phosphate (MTR-1-P) into methylthioribulose-1-phosphate (MTRu-1-P). This Trichoplax adhaerens (Trichoplax reptans) protein is Methylthioribose-1-phosphate isomerase.